A 230-amino-acid chain; its full sequence is LexA repressor (230 aa).

The segment at residues 28 to 48 (IREIGEALDIRSTNGVNDHLK) is a DNA-binding region (H-T-H motif). Catalysis depends on for autocatalytic cleavage activity residues Ser148 and Lys185.

Belongs to the peptidase S24 family. As to quaternary structure, homodimer.

It catalyses the reaction Hydrolysis of Ala-|-Gly bond in repressor LexA.. Its function is as follows. Represses a number of genes involved in the response to DNA damage (SOS response), including recA and lexA. In the presence of single-stranded DNA, RecA interacts with LexA causing an autocatalytic cleavage which disrupts the DNA-binding part of LexA, leading to derepression of the SOS regulon and eventually DNA repair. The protein is LexA repressor of Anaeromyxobacter sp. (strain K).